Reading from the N-terminus, the 329-residue chain is Ankyrin repeat and SOCS box protein 5 (329 aa).

ANK repeat units lie at residues 69-98, 102-131, 135-164, 167-196, 200-229, and 232-261; these read ADRS…NVNA, DHIT…NVNA, DGVT…KAQL, CLPS…DVDQ, HLGT…DVQK, and YWDT…DINA. The SOCS box domain occupies 278–329; the sequence is MVERILLQHEATPSSLCQLCRLCIRNYIGRPRLHLIPQLQLPTLLQNFLQYR.

The protein belongs to the ankyrin SOCS box (ASB) family. As to expression, expressed in endothelial and smooth muscle cells of collateral arteries as well as in satellite cells.

Its pathway is protein modification; protein ubiquitination. Functionally, may be a substrate-recognition component of a SCF-like ECS (Elongin-Cullin-SOCS-box protein) E3 ubiquitin-protein ligase complex which mediates the ubiquitination and subsequent proteasomal degradation of target proteins. May play a role in the initiation of arteriogenesis. In Oryctolagus cuniculus (Rabbit), this protein is Ankyrin repeat and SOCS box protein 5 (ASB5).